Consider the following 693-residue polypeptide: Protein-glutamine gamma-glutamyltransferase E (693 aa).

Y111 carries the phosphotyrosine modification. A Phosphothreonine modification is found at T112. Residues A222, N225, N227, D228, and N230 each coordinate Ca(2+). C273 is an active-site residue. Ca(2+) is bound by residues D302, D304, N306, S308, and D325. Catalysis depends on residues H331 and D354. The Ca(2+) site is built by N394, T416, E444, and E449. Residues 457–483 are disordered; the sequence is LDKLKPNASFGATSSRNPEGEDKEPSI.

This sequence belongs to the transglutaminase superfamily. Transglutaminase family. Consists of two polypeptide chains, which are synthesized as a precursor form of a single polypeptide. The cofactor is Ca(2+). In terms of processing, activated by proteolytic processing. In vitro activation is commonly achieved by cleavage with dispase, a neutral bacterial protease. Physiological activation may be catalyzed by CTSL and, to a lesser extent, by CTSS. In terms of tissue distribution, expressed in skin and stomach and, at lower levels, in testis, kidney and spleen (at protein level). On the basis of its catalytic activity, detected in the epidermis, around the granular and spinous layers but not in the outermost cornified layers. In hair follicles, mainly located in the medulla and the hair cortex.

The protein localises to the cytoplasm. It catalyses the reaction L-glutaminyl-[protein] + L-lysyl-[protein] = [protein]-L-lysyl-N(6)-5-L-glutamyl-[protein] + NH4(+). In terms of biological role, catalyzes the calcium-dependent formation of isopeptide cross-links between glutamine and lysine residues in various proteins, as well as the conjugation of polyamines to proteins. Involved in the formation of the cornified envelope (CE), a specialized component consisting of covalent cross-links of proteins beneath the plasma membrane of terminally differentiated keratinocytes. Catalyzes small proline-rich proteins (SPRR1 and SPRR2) and LOR cross-linking to form small interchain oligomers, which are further cross-linked by TGM1 onto the growing CE scaffold. In hair follicles, involved in cross-linking structural proteins to hardening the inner root sheath. In Mus musculus (Mouse), this protein is Protein-glutamine gamma-glutamyltransferase E (Tgm3).